A 184-amino-acid chain; its full sequence is ADP-ribosylation factor-like protein 3 (184 aa).

Gly-2 is lipidated: N-myristoyl glycine. Residues 24-31, 68-72, and 127-130 contribute to the GTP site; these read GLDNAGKT, DIGGQ, and NKQD.

It belongs to the small GTPase superfamily. Arf family.

It is found in the golgi apparatus. In terms of biological role, GTP-binding protein that may be involved in protein trafficking; may modulate vesicle budding and uncoating within the Golgi apparatus. The polypeptide is ADP-ribosylation factor-like protein 3 (arl-3) (Caenorhabditis elegans).